Consider the following 81-residue polypeptide: Short neurotoxin 2 (81 aa).

An N-terminal signal peptide occupies residues 1–21 (MKTLLLTLVVVTIVCLDLGYT). 4 cysteine pairs are disulfide-bonded: cysteine 24-cysteine 43, cysteine 38-cysteine 60, cysteine 62-cysteine 73, and cysteine 74-cysteine 79.

The protein belongs to the three-finger toxin family. Short-chain subfamily. Type I alpha-neurotoxin sub-subfamily. Expressed by the venom gland.

The protein resides in the secreted. Its function is as follows. Binds to muscle nicotinic acetylcholine receptor (nAChR) and inhibit acetylcholine from binding to the receptor, thereby impairing neuromuscular transmission. The chain is Short neurotoxin 2 from Drysdalia coronoides (White-lipped snake).